We begin with the raw amino-acid sequence, 765 residues long: Multifunctional tryptophan biosynthesis protein (765 aa).

One can recognise a Glutamine amidotransferase type-1 domain in the interval 2 to 196 (ATLLIDNYDS…LSLRGGNWDE (195 aa)). Residue 53–55 (GPG) coordinates L-glutamine. Cysteine 81 acts as the Nucleophile; for GATase activity in catalysis. L-glutamine is bound by residues glutamine 85 and 131–132 (SL). Residues histidine 170 and glutamate 172 each act as for GATase activity in the active site. Positions 231 to 494 (TILSRIYAQR…NLKEFVAELL (264 aa)) are indole-3-glycerol phosphate synthase. The segment at 512–765 (QVKICGISSV…VEKAKSINLQ (254 aa)) is N-(5'-phosphoribosyl)anthranilate isomerase.

It catalyses the reaction N-(5-phospho-beta-D-ribosyl)anthranilate = 1-(2-carboxyphenylamino)-1-deoxy-D-ribulose 5-phosphate. The enzyme catalyses 1-(2-carboxyphenylamino)-1-deoxy-D-ribulose 5-phosphate + H(+) = (1S,2R)-1-C-(indol-3-yl)glycerol 3-phosphate + CO2 + H2O. It carries out the reaction chorismate + L-glutamine = anthranilate + pyruvate + L-glutamate + H(+). It functions in the pathway amino-acid biosynthesis; L-tryptophan biosynthesis; L-tryptophan from chorismate: step 1/5. It participates in amino-acid biosynthesis; L-tryptophan biosynthesis; L-tryptophan from chorismate: step 3/5. The protein operates within amino-acid biosynthesis; L-tryptophan biosynthesis; L-tryptophan from chorismate: step 4/5. Trifunctional enzyme bearing the Gln amidotransferase (GATase) domain of anthranilate synthase, indole-glycerolphosphate synthase, and phosphoribosylanthranilate isomerase activities. The polypeptide is Multifunctional tryptophan biosynthesis protein (trp1) (Phycomyces blakesleeanus).